The sequence spans 397 residues: Elongation factor Tu (397 aa).

The 197-residue stretch at 10–206 folds into the tr-type G domain; it reads KPHVNIGTIG…AVDTSIPQPE (197 aa). Residues 19-26 are G1; it reads GHIDHGKT. 19–26 serves as a coordination point for GTP; the sequence is GHIDHGKT. Thr-26 lines the Mg(2+) pocket. The tract at residues 62–66 is G2; it reads GITIS. A G3 region spans residues 83 to 86; that stretch reads DCPG. Residues 83 to 87 and 138 to 141 each bind GTP; these read DCPGH and NKSD. Positions 138 to 141 are G4; the sequence is NKSD. The G5 stretch occupies residues 176-178; sequence SAL.

This sequence belongs to the TRAFAC class translation factor GTPase superfamily. Classic translation factor GTPase family. EF-Tu/EF-1A subfamily. In terms of assembly, monomer.

It is found in the cytoplasm. It catalyses the reaction GTP + H2O = GDP + phosphate + H(+). Its function is as follows. GTP hydrolase that promotes the GTP-dependent binding of aminoacyl-tRNA to the A-site of ribosomes during protein biosynthesis. The sequence is that of Elongation factor Tu from Salinispora tropica (strain ATCC BAA-916 / DSM 44818 / JCM 13857 / NBRC 105044 / CNB-440).